The sequence spans 128 residues: Small ribosomal subunit protein uS13 (128 aa).

A compositionally biased stretch (basic residues) spans 95 to 118 (GLPVRGQRTHTNARTRKGPKKGLV). The segment at 95 to 128 (GLPVRGQRTHTNARTRKGPKKGLVRKAAAPAPKA) is disordered.

The protein belongs to the universal ribosomal protein uS13 family. As to quaternary structure, part of the 30S ribosomal subunit. Forms a loose heterodimer with protein S19. Forms two bridges to the 50S subunit in the 70S ribosome.

Located at the top of the head of the 30S subunit, it contacts several helices of the 16S rRNA. In the 70S ribosome it contacts the 23S rRNA (bridge B1a) and protein L5 of the 50S subunit (bridge B1b), connecting the 2 subunits; these bridges are implicated in subunit movement. Contacts the tRNAs in the A and P-sites. The chain is Small ribosomal subunit protein uS13 from Anaeromyxobacter sp. (strain K).